We begin with the raw amino-acid sequence, 226 residues long: Ribonuclease 3 (226 aa).

The 123-residue stretch at 6–128 (INRLQRKLGY…LIGGIFLDSD (123 aa)) folds into the RNase III domain. A Mg(2+)-binding site is contributed by Glu-41. The active site involves Asp-45. The Mg(2+) site is built by Asp-114 and Glu-117. Glu-117 is an active-site residue. One can recognise a DRBM domain in the interval 155–225 (DPKTRLQEFL…AEQALKKLEL (71 aa)).

This sequence belongs to the ribonuclease III family. As to quaternary structure, homodimer. Requires Mg(2+) as cofactor.

Its subcellular location is the cytoplasm. It carries out the reaction Endonucleolytic cleavage to 5'-phosphomonoester.. In terms of biological role, digests double-stranded RNA. Involved in the processing of primary rRNA transcript to yield the immediate precursors to the large and small rRNAs (23S and 16S). Processes some mRNAs, and tRNAs when they are encoded in the rRNA operon. Processes pre-crRNA and tracrRNA of type II CRISPR loci if present in the organism. This is Ribonuclease 3 from Pectobacterium carotovorum subsp. carotovorum (strain PC1).